The following is a 1285-amino-acid chain: Nuclear pore complex protein NUP133 (1285 aa).

2 disordered regions span residues 1–53 and 522–580; these read MFSP…PAPW and EPPE…QTAR. Over residues 31–41 the composition is skewed to polar residues; that stretch reads TPATQNRNNFI. Composition is skewed to basic and acidic residues over residues 523–544 and 553–569; these read PPER…DETR and TAGR…DKGN.

The protein belongs to the nucleoporin Nup133 family. As to quaternary structure, part of the nuclear pore complex (NPC). The NPC has an eight-fold symmetrical structure comprising a central transport channel and two rings, the cytoplasmic and nuclear rings, to which eight filaments are attached. The cytoplasmic filaments have loose ends, while the nuclear filaments are joined in a distal ring, forming a nuclear basket. NPCs are highly dynamic in configuration and composition, and can be devided in 3 subcomplexes, the NUP62 subcomplex, the NUP107-160 subcomplex and the NUP93 subcomplex, containing approximately 30 different nucleoporin proteins.

It localises to the nucleus envelope. The protein localises to the nucleus. It is found in the nuclear pore complex. The protein is Nuclear pore complex protein NUP133 of Arabidopsis thaliana (Mouse-ear cress).